We begin with the raw amino-acid sequence, 315 residues long: uncharacterized protein (315 aa).

A compositionally biased stretch (basic residues) spans 296-308; sequence RSKLRKGTHKRTP. The disordered stretch occupies residues 296–315; sequence RSKLRKGTHKRTPGRAGDAD.

The protein belongs to the metallo-dependent hydrolases superfamily. Peptidase M19 family.

This is an uncharacterized protein from Acinetobacter calcoaceticus.